The chain runs to 148 residues: 3-dehydroquinate dehydratase (148 aa).

Tyr23 functions as the Proton acceptor in the catalytic mechanism. Positions 75, 81, and 88 each coordinate substrate. His101 serves as the catalytic Proton donor. Residues 102-103 (IS) and Arg112 each bind substrate.

The protein belongs to the type-II 3-dehydroquinase family. Homododecamer.

It carries out the reaction 3-dehydroquinate = 3-dehydroshikimate + H2O. Its pathway is metabolic intermediate biosynthesis; chorismate biosynthesis; chorismate from D-erythrose 4-phosphate and phosphoenolpyruvate: step 3/7. Catalyzes a trans-dehydration via an enolate intermediate. In Methylococcus capsulatus (strain ATCC 33009 / NCIMB 11132 / Bath), this protein is 3-dehydroquinate dehydratase.